Here is a 937-residue protein sequence, read N- to C-terminus: Chromatin assembly factor 1 subunit A (937 aa).

The disordered stretch occupies residues 21 to 69 (RLPFKRLNPVPKEKHDAEAEGKKGKCSKSGLGQSKDSSTDTLHASTDNM). Residues 31–43 (PKEKHDAEAEGKK) are compositionally biased toward basic and acidic residues. Positions 59 to 69 (TDTLHASTDNM) are enriched in polar residues. A PxVxL motif motif is present at residues 213 to 226 (FEGKMPVVLLEDIM). Disordered regions lie at residues 250–386 (SHEG…EKRK), 574–614 (VDSD…IPHG), 753–778 (GDTS…VPSK), 831–851 (SGKE…TPVS), and 910–937 (TVTE…SNTV). Residues 255–269 (SVLTNSSLSSLSVSS) show a composition bias toward low complexity. Residues 301-386 (SSAEKEKLRL…KLRVKEEKRK (86 aa)) show a composition bias toward basic and acidic residues. Acidic residues-rich tracts occupy residues 574-586 (VDSD…EEPG) and 594-608 (GDDE…DDDG). Residues 756 to 766 (SPVSPNTSRPQ) show a composition bias toward polar residues.

It belongs to the CHAF1A family. Subunit of the CAF-1 complex that contains RBBP4, CHAF1B and CHAF1A. Interacts with CHAF1B, PCNA and RBBP4.

The protein resides in the nucleus. Functionally, acts as a component of the histone chaperone complex chromatin assembly factor 1 (CAF-1), which assembles histone octamers onto DNA during replication and repair. CAF-1 performs the first step of the nucleosome assembly process, bringing newly synthesized histones H3 and H4 to replicating DNA; histones H2A/H2B can bind to this chromatin precursor subsequent to DNA replication to complete the histone octamer. The protein is Chromatin assembly factor 1 subunit A (CHAF1A) of Gallus gallus (Chicken).